We begin with the raw amino-acid sequence, 311 residues long: Beta-lactamase (311 aa).

The tat-type signal signal peptide spans 1-36 (MRKPTSSLTRRSVLGAGLGLGGALALGSTTASAASA). The Acyl-ester intermediate role is filled by serine 86. 252 to 254 (KSG) provides a ligand contact to substrate.

It belongs to the class-A beta-lactamase family. Post-translationally, predicted to be exported by the Tat system. The position of the signal peptide cleavage has not been experimentally proven.

It catalyses the reaction a beta-lactam + H2O = a substituted beta-amino acid. Functionally, hydrolyzes benzylpenicillin and cloxacillin (at 10% of the rate of benzylpenicillin). In Streptomyces cellulosae, this protein is Beta-lactamase (bla).